Here is a 427-residue protein sequence, read N- to C-terminus: Methylthioribose kinase 2 (427 aa).

ATP contacts are provided by residues 49-53, Lys-68, and 122-124; these read DGNLN and RYI. Asn-51 provides a ligand contact to substrate. Asp-243 is a binding site for substrate. 260 to 262 serves as a coordination point for ATP; it reads DPE. Residue Arg-370 participates in substrate binding.

It belongs to the methylthioribose kinase family. Homodimer.

The enzyme catalyses 5-(methylsulfanyl)-D-ribose + ATP = 5-(methylsulfanyl)-alpha-D-ribose 1-phosphate + ADP + H(+). The protein operates within amino-acid biosynthesis; L-methionine biosynthesis via salvage pathway; S-methyl-5-thio-alpha-D-ribose 1-phosphate from S-methyl-5'-thioadenosine (hydrolase route): step 2/2. In terms of biological role, catalyzes the phosphorylation of methylthioribose into methylthioribose-1-phosphate. The protein is Methylthioribose kinase 2 (MTK2) of Oryza sativa subsp. japonica (Rice).